Here is a 127-residue protein sequence, read N- to C-terminus: Fluoride-specific ion channel FluC (127 aa).

4 helical membrane passes run 4–24, 35–55, 68–88, and 96–116; these read SLLAIGLGAMVGAWLRWGLGM, PGTLLANLIGGYIIGLAIAFF, LLITGFCGGLTTFSTFSAEVV, and ILWALGSIALHVSGSLLMTAA. Residues glycine 75 and threonine 78 each coordinate Na(+).

This sequence belongs to the fluoride channel Fluc/FEX (TC 1.A.43) family.

The protein resides in the cell inner membrane. The enzyme catalyses fluoride(in) = fluoride(out). With respect to regulation, na(+) is not transported, but it plays an essential structural role and its presence is essential for fluoride channel function. Its function is as follows. Fluoride-specific ion channel. Important for reducing fluoride concentration in the cell, thus reducing its toxicity. The polypeptide is Fluoride-specific ion channel FluC (Pseudomonas putida (strain W619)).